Reading from the N-terminus, the 355-residue chain is Plasmodial-specific protein LAV1-2 (355 aa).

EF-hand domains lie at 151 to 186 (EDTN…YADT) and 217 to 252 (NDLA…LGFD). Positions 230, 232, 234, 236, 241, 265, 267, 269, 271, 276, 295, 297, 299, 301, 306, 332, 334, 336, 338, and 343 each coordinate Ca(2+). 2 EF-hand domains span residues 282–317 (LCLL…AHIP) and 319–354 (SARK…MFHD).

The polypeptide is Plasmodial-specific protein LAV1-2 (Physarum polycephalum (Slime mold)).